A 519-amino-acid polypeptide reads, in one-letter code: Probable cytochrome P450 6g2 (519 aa).

Residue Cys460 participates in heme binding.

Belongs to the cytochrome P450 family. The cofactor is heme.

It localises to the endoplasmic reticulum membrane. The protein localises to the microsome membrane. May be involved in the metabolism of insect hormones and in the breakdown of synthetic insecticides. The protein is Probable cytochrome P450 6g2 (Cyp6g2) of Drosophila melanogaster (Fruit fly).